A 462-amino-acid polypeptide reads, in one-letter code: Microspherule protein 1 (462 aa).

Met-1 bears the N-acetylmethionine mark. Residues 1-130 (MDKDSQGLLD…KSKQPLQVTK (130 aa)) form a disordered region. Ser-22 carries the post-translational modification Phosphoserine. Residues 43–55 (PKRRSSSRFIKRK) show a composition bias toward basic residues. Low complexity predominate over residues 81–90 (SGRCSGSEPS). The residue at position 102 (Ser-102) is a Phosphoserine. Thr-103 is modified (phosphothreonine). Residues 103 to 112 (TPVPPSPAPT) show a composition bias toward pro residues. Residue Ser-108 is modified to Phosphoserine. A Nuclear localization signal motif is present at residues 113–123 (PGLTKRVKKSK). N6-acetyllysine is present on residues Lys-123 and Lys-130. Ser-282 is subject to Phosphoserine. The stretch at 301–335 (LEHELTVADRRQKREIRQLEQELHKWQVLVDSITG) forms a coiled coil. Residues 363-419 (ITLGRATKDNQIDVDLSLEGPAWKISRKQGVIKLKNNGDFFIANEGRRPIYIDGRPV) form the FHA domain. Positions 389–396 (RKQGVIKL) match the UBR5-degron motif.

In terms of assembly, component of the chromatin remodeling INO80 complex; specifically part of a complex module associated with the N-terminus of INO80. Component of some MLL1/MLL complex, at least composed of the core components KMT2A/MLL1, ASH2L, HCFC1, WDR5 and RBBP5, as well as the facultative components BACC1, CHD8, E2F6, HSP70, INO80C, KANSL1, LAS1L, MAX, MCRS1, MGA, KAT8/MOF, PELP1, PHF20, PRP31, RING2, RUVB1/TIP49A, RUVB2/TIP49B, SENP3, TAF1, TAF4, TAF6, TAF7, TAF9 and TEX10. Component of the NSL complex at least composed of MOF/KAT8, KANSL1, KANSL2, KANSL3, MCRS1, PHF20, OGT1/OGT, WDR5 and HCFC1. Interacts with NOP2. Interacts with PINX1. Interacts with TERT. Interacts with CCDC85B. Interacts with DAXX. Interacts (via N-terminus) with FMR1 (via phosphorylated form). Interacts with FXR1 and FXR2. Interacts (via C-terminus) with NDE1 (via C-terminus); phosphorylation of NDE1 inhibits the interaction. Interacts (via C-terminus) with ZNF375. Interacts (via C-terminus) with active GTP-bound RHEB (via N-terminus) under conditions of high amino acid concentration; the interaction promotes mTORC1 complex activation by RHEB. Interacts (via N-terminus) with the mTORC1 complex; the interaction ensures mTORC1 activation by RHEB. Interacts with DYNC1I1; the interaction is required for the proper distribution of centriolar satellites. Interacts with TTBK2; the interaction is required for recruitment of TTBK2 to the mother centriole. Interacts with KIF2A; the interaction occurs during mitosis and facilitates chromosome alignment. In terms of processing, ubiquitinated by UBR5 when not assembled in the INO80 complex, leading to its degradation: UBR5 recognizes and binds a degron that is not accessible when MCRS1 is part of the INO80 complex. Post-translationally, phosphorylated by AURKA on Ser-35 and/or Ser-36 during mitosis which is required for kinetochore fiber assembly and mitotic progression but not for spindle localization or for chromosome-induced microtuble aster formation. Also phosphorylated by AURKA on Ser-85 and/or Ser-87. Phosphorylated by TTK/MPS1 which enhances recruitment of KIF2A to the minus end of spindle microtubules and facilitates precise chromosome segregation.

The protein resides in the nucleus. Its subcellular location is the nucleolus. The protein localises to the cytoplasm. It localises to the cytoskeleton. It is found in the microtubule organizing center. The protein resides in the centrosome. Its subcellular location is the spindle pole. The protein localises to the chromosome. It localises to the centromere. It is found in the kinetochore. The protein resides in the lysosome. Its subcellular location is the centriolar satellite. In terms of biological role, modulates the transcription repressor activity of DAXX by recruiting it to the nucleolus. As part of the NSL complex it may be involved in acetylation of nucleosomal histone H4 on several lysine residues. Putative regulatory component of the chromatin remodeling INO80 complex which is involved in transcriptional regulation, DNA replication and probably DNA repair. May also be an inhibitor of TERT telomerase activity. Binds to G-quadruplex structures in mRNA. Binds to RNA homomer poly(G) and poly(U). Maintains RHEB at the lysosome in its active GTP-bound form and prevents its interaction with the mTORC1 complex inhibitor TSC2, ensuring activation of the mTORC1 complex by RHEB. Stabilizes the minus ends of kinetochore fibers by protecting them from depolymerization, ensuring functional spindle assembly during mitosis. Following phosphorylation by TTK/MPS1, enhances recruitment of KIF2A to the minus ends of mitotic spindle microtubules which promotes chromosome alignment. Regulates the morphology of microtubule minus ends in mitotic spindle by maintaining them in a closed conformation characterized by the presence of an electron-dense cap. Regulates G2/M transition and spindle assembly during oocyte meiosis. Mediates histone modifications and transcriptional regulation in germinal vesicle oocytes which are required for meiotic progression. Also regulates microtubule nucleation and spindle assembly by activating aurora kinases during oocyte meiosis. Contributes to the establishment of centriolar satellites and also plays a role in primary cilium formation by recruiting TTBK2 to the mother centriole which is necessary for removal of the CP110 cap from the mother centriole, an early step in ciliogenesis. Required for epiblast development during early embryogenesis. Essential for cell viability. In Mus musculus (Mouse), this protein is Microspherule protein 1 (Mcrs1).